The primary structure comprises 563 residues: Endoglucanase B (563 aa).

The or 31 signal peptide spans Met-1–Ala-27. Glu-204 serves as the catalytic Proton donor. Glu-363 functions as the Nucleophile in the catalytic mechanism. The tract at residues Ser-476 to Thr-495 is disordered. The region spanning Asp-496 to Tyr-562 is the Dockerin domain.

It belongs to the glycosyl hydrolase 5 (cellulase A) family.

It catalyses the reaction Endohydrolysis of (1-&gt;4)-beta-D-glucosidic linkages in cellulose, lichenin and cereal beta-D-glucans.. Functionally, this enzyme catalyzes the endohydrolysis of 1,4-beta-glucosidic linkages in cellulose, lichenin and cereal beta-D-glucans. The protein is Endoglucanase B (celB) of Acetivibrio thermocellus (strain ATCC 27405 / DSM 1237 / JCM 9322 / NBRC 103400 / NCIMB 10682 / NRRL B-4536 / VPI 7372) (Clostridium thermocellum).